An 88-amino-acid polypeptide reads, in one-letter code: UPF0297 protein str1959 (88 aa).

The protein belongs to the UPF0297 family.

This chain is UPF0297 protein str1959, found in Streptococcus thermophilus (strain CNRZ 1066).